A 265-amino-acid polypeptide reads, in one-letter code: Thiazole synthase (265 aa).

The Schiff-base intermediate with DXP role is filled by Lys-103. 1-deoxy-D-xylulose 5-phosphate-binding positions include Gly-164, 190 to 191, and 212 to 213; these read AG and NT.

This sequence belongs to the ThiG family. Homotetramer. Forms heterodimers with either ThiH or ThiS.

It localises to the cytoplasm. It carries out the reaction [ThiS sulfur-carrier protein]-C-terminal-Gly-aminoethanethioate + 2-iminoacetate + 1-deoxy-D-xylulose 5-phosphate = [ThiS sulfur-carrier protein]-C-terminal Gly-Gly + 2-[(2R,5Z)-2-carboxy-4-methylthiazol-5(2H)-ylidene]ethyl phosphate + 2 H2O + H(+). Its pathway is cofactor biosynthesis; thiamine diphosphate biosynthesis. Its function is as follows. Catalyzes the rearrangement of 1-deoxy-D-xylulose 5-phosphate (DXP) to produce the thiazole phosphate moiety of thiamine. Sulfur is provided by the thiocarboxylate moiety of the carrier protein ThiS. In vitro, sulfur can be provided by H(2)S. The protein is Thiazole synthase of Bordetella pertussis (strain Tohama I / ATCC BAA-589 / NCTC 13251).